A 262-amino-acid chain; its full sequence is Polyamine aminopropyltransferase (262 aa).

Residues 1 to 249 (MWITQEITPY…DIHRAAFALP (249 aa)) enclose the PABS domain. Asn-29 provides a ligand contact to S-methyl-5'-thioadenosine. Asp-83 contacts spermidine. Asp-155 functions as the Proton acceptor in the catalytic mechanism.

This sequence belongs to the spermidine/spermine synthase family. In terms of assembly, homodimer or homotetramer.

Its subcellular location is the cytoplasm. The enzyme catalyses S-adenosyl 3-(methylsulfanyl)propylamine + putrescine = S-methyl-5'-thioadenosine + spermidine + H(+). It participates in amine and polyamine biosynthesis; spermidine biosynthesis; spermidine from putrescine: step 1/1. Its function is as follows. Catalyzes the irreversible transfer of a propylamine group from the amino donor S-adenosylmethioninamine (decarboxy-AdoMet) to putrescine (1,4-diaminobutane) to yield spermidine. The polypeptide is Polyamine aminopropyltransferase (Helicobacter pylori (strain HPAG1)).